Here is a 280-residue protein sequence, read N- to C-terminus: 3,2-trans-enoyl-CoA isomerase (280 aa).

Residues 68 to 72 (SGADF) and Leu-126 each bind substrate. Glu-158 (proton donor/acceptor) is an active-site residue. The Microbody targeting signal signature appears at 278–280 (HRL).

This sequence belongs to the enoyl-CoA hydratase/isomerase family. In terms of assembly, homohexamer, dimer of trimers. Interacts with DCI1.

It is found in the peroxisome. The catalysed reaction is a (3Z)-enoyl-CoA = a 4-saturated (2E)-enoyl-CoA. It carries out the reaction a (3E)-enoyl-CoA = a 4-saturated (2E)-enoyl-CoA. Its pathway is lipid metabolism; fatty acid beta-oxidation. Functionally, essential for the beta oxidation of unsaturated fatty acids. The protein is 3,2-trans-enoyl-CoA isomerase (ECI1) of Saccharomyces cerevisiae (strain ATCC 204508 / S288c) (Baker's yeast).